The primary structure comprises 269 residues: RBPJ-interacting and tubulin-associated protein 1 (269 aa).

A Nuclear export signal motif is present at residues valine 5 to leucine 17. Disordered regions lie at residues valine 66–histidine 105 and leucine 141–lysine 269. Over residues cysteine 80–leucine 92 the composition is skewed to polar residues. A Nuclear localization signal motif is present at residues leucine 92–serine 108. Residues arginine 128–proline 156 are interaction with RBPJ/RBPSUH. The interaction with tubulin stretch occupies residues proline 156–lysine 269. Residues histidine 200–serine 253 show a composition bias toward polar residues.

It belongs to the RITA family. Interacts with RBPJ/RBPSUH.

It is found in the cytoplasm. Its subcellular location is the nucleus. The protein localises to the cytoskeleton. The protein resides in the microtubule organizing center. It localises to the centrosome. Its function is as follows. Tubulin-binding protein that acts as a negative regulator of Notch signaling pathway. Shuttles between the cytoplasm and the nucleus and mediates the nuclear export of RBPJ/RBPSUH, thereby preventing the interaction between RBPJ/RBPSUH and NICD product of Notch proteins (Notch intracellular domain), leading to down-regulate Notch-mediated transcription. May play a role in neurogenesis. The chain is RBPJ-interacting and tubulin-associated protein 1 (RITA1) from Homo sapiens (Human).